The sequence spans 432 residues: Short/branched chain specific acyl-CoA dehydrogenase, mitochondrial (432 aa).

Residues 1 to 33 constitute a mitochondrion transit peptide; sequence MEGLAVRLLRGSRLLRRNFPTCLSSWKIPPHVS. Lys70 carries the post-translational modification N6-acetyllysine; alternate. Lys70 bears the N6-succinyllysine; alternate mark. FAD contacts are provided by residues 174 to 183 and 207 to 209; these read FCLSEAGAGS and WIS. Residue Ser183 participates in substrate binding. Ser183 is modified (phosphoserine). Substrate-binding residues include Tyr229 and Tyr283. N6-acetyllysine; alternate is present on Lys284. Lys284 is modified (N6-succinyllysine; alternate). 291–294 is a substrate binding site; it reads NEGR. FAD-binding positions include Arg319, Gln330, and 387-391; that span reads EWMGG. Residue Glu414 is the Proton acceptor of the active site. 416-418 is an FAD binding site; it reads ASN. Lys426 carries the N6-acetyllysine modification.

This sequence belongs to the acyl-CoA dehydrogenase family. Homotetramer. It depends on FAD as a cofactor.

Its subcellular location is the mitochondrion matrix. It carries out the reaction 2-methylbutanoyl-CoA + oxidized [electron-transfer flavoprotein] + H(+) = (2E)-2-methylbut-2-enoyl-CoA + reduced [electron-transfer flavoprotein]. The enzyme catalyses (2S)-2-methylbutanoyl-CoA + oxidized [electron-transfer flavoprotein] + H(+) = (2E)-2-methylbut-2-enoyl-CoA + reduced [electron-transfer flavoprotein]. The catalysed reaction is (2R)-2-methylbutanoyl-CoA + oxidized [electron-transfer flavoprotein] + H(+) = ethylacryloyl-CoA + reduced [electron-transfer flavoprotein]. It catalyses the reaction butanoyl-CoA + oxidized [electron-transfer flavoprotein] + H(+) = (2E)-butenoyl-CoA + reduced [electron-transfer flavoprotein]. It carries out the reaction 2-methylpropanoyl-CoA + oxidized [electron-transfer flavoprotein] + H(+) = 2-methylpropenoyl-CoA + reduced [electron-transfer flavoprotein]. The enzyme catalyses hexanoyl-CoA + oxidized [electron-transfer flavoprotein] + H(+) = (2E)-hexenoyl-CoA + reduced [electron-transfer flavoprotein]. The catalysed reaction is valproyl-CoA + oxidized [electron-transfer flavoprotein] + H(+) = (2E)-2-propylpent-2-enoyl-CoA + reduced [electron-transfer flavoprotein]. It participates in lipid metabolism; mitochondrial fatty acid beta-oxidation. Its pathway is amino-acid degradation; L-isoleucine degradation. Functionally, short and branched chain specific acyl-CoA dehydrogenase that catalyzes the removal of one hydrogen from C-2 and C-3 of the fatty acyl-CoA thioester, resulting in the formation of trans-2-enoyl-CoA. Among the different mitochondrial acyl-CoA dehydrogenases, acts specifically on short and branched chain acyl-CoA derivatives such as (S)-2-methylbutyryl-CoA as well as short straight chain acyl-CoAs such as butyryl-CoA. Plays an important role in the metabolism of L-isoleucine by catalyzing the dehydrogenation of 2-methylbutyryl-CoA, one of the steps of the L-isoleucine catabolic pathway. Can also act on valproyl-CoA, a metabolite of the valproic acid drug. The protein is Short/branched chain specific acyl-CoA dehydrogenase, mitochondrial (ACADSB) of Pongo abelii (Sumatran orangutan).